The primary structure comprises 48 residues: uncharacterized protein (48 aa).

The disordered stretch occupies residues 1-48 (MSRRMGGGMPKINLSGAIPNNNTSTPSTPTLRSSVSVSSSNSRGLFLA). Residues 20-48 (NNNTSTPSTPTLRSSVSVSSSNSRGLFLA) are compositionally biased toward low complexity.

This is an uncharacterized protein from Dictyostelium discoideum (Social amoeba).